Here is a 176-residue protein sequence, read N- to C-terminus: Isopentenyl-diphosphate Delta-isomerase 1 (176 aa).

Mn(2+) is bound by residues H23 and H30. The 135-residue stretch at 28 to 162 (HLHRAFSCFI…EEFCTPWFKK (135 aa)) folds into the Nudix hydrolase domain. C65 is an active-site residue. Residue C65 participates in Mg(2+) binding. H67 provides a ligand contact to Mn(2+). E85 contributes to the Mg(2+) binding site. 2 residues coordinate Mn(2+): E112 and E114. The active site involves E114.

The protein belongs to the IPP isomerase type 1 family. In terms of assembly, homodimer. Requires Mg(2+) as cofactor. Mn(2+) is required as a cofactor.

It localises to the cytoplasm. It carries out the reaction isopentenyl diphosphate = dimethylallyl diphosphate. The protein operates within isoprenoid biosynthesis; dimethylallyl diphosphate biosynthesis; dimethylallyl diphosphate from isopentenyl diphosphate: step 1/1. Its function is as follows. Catalyzes the 1,3-allylic rearrangement of the homoallylic substrate isopentenyl (IPP) to its highly electrophilic allylic isomer, dimethylallyl diphosphate (DMAPP). The sequence is that of Isopentenyl-diphosphate Delta-isomerase 1 from Photorhabdus laumondii subsp. laumondii (strain DSM 15139 / CIP 105565 / TT01) (Photorhabdus luminescens subsp. laumondii).